We begin with the raw amino-acid sequence, 419 residues long: L-rhamnose isomerase (419 aa).

Residues histidine 262, aspartate 294, and aspartate 296 each coordinate Mn(2+).

This sequence belongs to the rhamnose isomerase family. As to quaternary structure, homotetramer. The cofactor is Mn(2+).

It is found in the cytoplasm. The catalysed reaction is L-rhamnopyranose = L-rhamnulose. Its pathway is carbohydrate degradation; L-rhamnose degradation; glycerone phosphate from L-rhamnose: step 1/3. Catalyzes the interconversion of L-rhamnose and L-rhamnulose. The chain is L-rhamnose isomerase from Escherichia coli (strain SMS-3-5 / SECEC).